Consider the following 142-residue polypeptide: Lysozyme 2 (142 aa).

The N-terminal stretch at 1–20 (MLKLTLTILAAVLLVTPAFG) is a signal peptide. The C-type lysozyme domain occupies 21-142 (KVYTRCSLAR…HTLPSIDDCF (122 aa)). Cystine bridges form between Cys-26–Cys-141, Cys-47–Cys-131, Cys-82–Cys-98, and Cys-94–Cys-112. Residue Glu-52 is part of the active site. The N-linked (GlcNAc...) asparagine glycan is linked to Asn-66. The active site involves Asp-70.

Belongs to the glycosyl hydrolase 22 family. Expressed only in the midgut where it is concentrated around the middle in all larval stages.

The protein localises to the secreted. The enzyme catalyses Hydrolysis of (1-&gt;4)-beta-linkages between N-acetylmuramic acid and N-acetyl-D-glucosamine residues in a peptidoglycan and between N-acetyl-D-glucosamine residues in chitodextrins.. Functionally, lysozymes have primarily a bacteriolytic function. Shows antibacterial activity against Gram-positive bacterium M.luteus but shows no activity against Gram-negative bacterium E.coli. Likely to play a role in the eradication of ingested pathogens during their passage through the intestine. The chain is Lysozyme 2 from Lucilia sericata (Green bottle fly).